Here is a 600-residue protein sequence, read N- to C-terminus: Jacalin-related lectin 18 (600 aa).

4 Jacalin-type lectin domains span residues T12–C158, P161–T303, S304–L447, and G454–P597.

This sequence belongs to the jacalin lectin family.

In Arabidopsis thaliana (Mouse-ear cress), this protein is Jacalin-related lectin 18 (JAL18).